A 101-amino-acid chain; its full sequence is Apolipoprotein C-II (101 aa).

The N-terminal stretch at 1 to 22 (MGTRFLLALFLVLLVLGFEVQG) is a signal peptide. The segment at 66–74 (TVDEKLRDM) is lipid binding. The interval 78-101 (STAAMSTYAGILTDQVLSMLKGEE) is lipoprotein lipase cofactor.

This sequence belongs to the apolipoprotein C2 family. In terms of processing, proapolipoprotein C-II is synthesized as a sialic acid containing glycoprotein which is subsequently desialylated prior to its proteolytic processing. Post-translationally, proapolipoprotein C-II, the major form found in plasma undergoes proteolytic cleavage of its N-terminal hexapeptide to generate apolipoprotein C-II, which occurs as the minor form in plasma.

Its subcellular location is the secreted. In terms of biological role, component of chylomicrons, very low-density lipoproteins (VLDL), low-density lipoproteins (LDL), and high-density lipoproteins (HDL) in plasma. Plays an important role in lipoprotein metabolism as an activator of lipoprotein lipase. Both proapolipoprotein C-II and apolipoprotein C-II can activate lipoprotein lipase. This Aotus nancymaae (Ma's night monkey) protein is Apolipoprotein C-II (APOC2).